A 526-amino-acid chain; its full sequence is Cholesterol side-chain cleavage enzyme, mitochondrial (526 aa).

A mitochondrion-targeting transit peptide spans 1 to 36 (MLAKGLCLRSVLVKSCQPFLSPVWQGPGLATGNGAG). C459 lines the heme pocket.

It belongs to the cytochrome P450 family. In terms of assembly, interacts with FDX1/adrenodoxin. The cofactor is heme. In terms of tissue distribution, expressed in the kidney where it localizes to the distal convoluted tubule and the thick ascending limb of the loop of Henle (at protein level). In the ovary, highly expressed in interstitial cells (at protein level). Also expressed in adrenal gland and testis.

It localises to the mitochondrion inner membrane. The catalysed reaction is 6 reduced [adrenodoxin] + cholesterol + 3 O2 + 6 H(+) = 4-methylpentanal + pregnenolone + 6 oxidized [adrenodoxin] + 4 H2O. The enzyme catalyses 2 reduced [adrenodoxin] + cholesterol + O2 + 2 H(+) = (22R)-hydroxycholesterol + 2 oxidized [adrenodoxin] + H2O. It carries out the reaction (22R)-hydroxycholesterol + 2 reduced [adrenodoxin] + O2 + 2 H(+) = (20R,22R)-20,22-dihydroxycholesterol + 2 oxidized [adrenodoxin] + H2O. It catalyses the reaction (20R,22R)-20,22-dihydroxycholesterol + 2 reduced [adrenodoxin] + O2 + 2 H(+) = 4-methylpentanal + pregnenolone + 2 oxidized [adrenodoxin] + 2 H2O. The protein operates within lipid metabolism; C21-steroid hormone metabolism. It functions in the pathway steroid metabolism; cholesterol metabolism. In terms of biological role, a cytochrome P450 monooxygenase that catalyzes the side-chain hydroxylation and cleavage of cholesterol to pregnenolone, the precursor of most steroid hormones. Catalyzes three sequential oxidation reactions of cholesterol, namely the hydroxylation at C22 followed with the hydroxylation at C20 to yield 20R,22R-hydroxycholesterol that is further cleaved between C20 and C22 to yield the C21-steroid pregnenolone and 4-methylpentanal. Mechanistically, uses molecular oxygen inserting one oxygen atom into a substrate and reducing the second into a water molecule. Two electrons are provided by NADPH via a two-protein mitochondrial transfer system comprising flavoprotein FDXR (adrenodoxin/ferredoxin reductase) and nonheme iron-sulfur protein FDX1 or FDX2 (adrenodoxin/ferredoxin). This Rattus norvegicus (Rat) protein is Cholesterol side-chain cleavage enzyme, mitochondrial.